The sequence spans 462 residues: uncharacterized protein (462 aa).

Helical transmembrane passes span 12-32 (WWWL…APTV) and 257-277 (GLCV…LELV).

It belongs to the HHV-5 US29 protein family.

It localises to the host membrane. This is an uncharacterized protein from Human cytomegalovirus (strain AD169) (HHV-5).